Reading from the N-terminus, the 536-residue chain is Keratin, type II cytoskeletal 4 (536 aa).

The segment at 1-145 (MISRQSSVRG…DPEIQKIRTA (145 aa)) is head. An Omega-N-methylarginine modification is found at Arg13. The coil 1A stretch occupies residues 146-181 (EREQIKTLNNKFASFIDKVRFLEQQNKVLETKWNLL). An IF rod domain is found at 146-457 (EREQIKTLNN…KLLEGEECRM (312 aa)). The interval 182–200 (QQQTTTTSPRNLDPFFETY) is linker 1. The tract at residues 201–293 (INALRKNLDT…LYEAELSQMQ (93 aa)) is coil 1B. Positions 294-316 (THVSDTSVVLSMDNNRNLDLDGI) are linker 12. The segment at 317-454 (IAEVRAQYEE…TYRKLLEGEE (138 aa)) is coil 2. The segment at 455 to 524 (CRMSGECKSA…TSSATITKRS (70 aa)) is tail. The segment at 515 to 536 (TSSATITKRSPRTRQDPDGLQP) is disordered. A compositionally biased stretch (basic and acidic residues) spans 527 to 536 (TRQDPDGLQP).

Belongs to the intermediate filament family. As to quaternary structure, heterotetramer of two type I and two type II keratins. keratin-4 is generally associated with keratin-13.

The polypeptide is Keratin, type II cytoskeletal 4 (Rattus norvegicus (Rat)).